The primary structure comprises 267 residues: S-adenosylmethionine decarboxylase proenzyme (267 aa).

The active-site Schiff-base intermediate with substrate; via pyruvic acid is Ser-114. Ser-114 carries the pyruvic acid (Ser); by autocatalysis modification. His-119 functions as the Proton acceptor; for processing activity in the catalytic mechanism. Residue Cys-142 is the Proton donor; for catalytic activity of the active site.

The protein belongs to the prokaryotic AdoMetDC family. Type 2 subfamily. In terms of assembly, heterooctamer of four alpha and four beta chains arranged as a tetramer of alpha/beta heterodimers. Pyruvate serves as cofactor. In terms of processing, is synthesized initially as an inactive proenzyme. Formation of the active enzyme involves a self-maturation process in which the active site pyruvoyl group is generated from an internal serine residue via an autocatalytic post-translational modification. Two non-identical subunits are generated from the proenzyme in this reaction, and the pyruvate is formed at the N-terminus of the alpha chain, which is derived from the carboxyl end of the proenzyme. The post-translation cleavage follows an unusual pathway, termed non-hydrolytic serinolysis, in which the side chain hydroxyl group of the serine supplies its oxygen atom to form the C-terminus of the beta chain, while the remainder of the serine residue undergoes an oxidative deamination to produce ammonia and the pyruvoyl group blocking the N-terminus of the alpha chain.

The enzyme catalyses S-adenosyl-L-methionine + H(+) = S-adenosyl 3-(methylsulfanyl)propylamine + CO2. Its pathway is amine and polyamine biosynthesis; S-adenosylmethioninamine biosynthesis; S-adenosylmethioninamine from S-adenosyl-L-methionine: step 1/1. In terms of biological role, catalyzes the decarboxylation of S-adenosylmethionine to S-adenosylmethioninamine (dcAdoMet), the propylamine donor required for the synthesis of the polyamines spermine and spermidine from the diamine putrescine. This Erwinia tasmaniensis (strain DSM 17950 / CFBP 7177 / CIP 109463 / NCPPB 4357 / Et1/99) protein is S-adenosylmethionine decarboxylase proenzyme.